The following is a 185-amino-acid chain: uncharacterized protein (185 aa).

Component of the acid-insoluble and acid-soluble organic matrix of calcified layers of the shell (at protein level).

It is found in the secreted. This is an uncharacterized protein from Lottia gigantea (Giant owl limpet).